The following is a 212-amino-acid chain: Large ribosomal subunit protein bL25 (212 aa).

Residues 1–25 (MSQSTIHKIAVKKRTETGKNENNRL) form a disordered region. A compositionally biased stretch (basic and acidic residues) spans 13-24 (KRTETGKNENNR).

It belongs to the bacterial ribosomal protein bL25 family. CTC subfamily. Part of the 50S ribosomal subunit; part of the 5S rRNA/L5/L18/L25 subcomplex. Contacts the 5S rRNA. Binds to the 5S rRNA independently of L5 and L18.

Its function is as follows. This is one of the proteins that binds to the 5S RNA in the ribosome where it forms part of the central protuberance. This is Large ribosomal subunit protein bL25 from Leptospira borgpetersenii serovar Hardjo-bovis (strain L550).